Here is a 343-residue protein sequence, read N- to C-terminus: Aspartate beta-hydroxylase domain-containing protein 2 (343 aa).

Residues 1–31 (MWLEWLVAWSWSLDGLRDCIATGIQSVRDCD) are Cytoplasmic-facing. Residues 32–52 (GTAVITVACLLVLFVWYCYHV) form a helical membrane-spanning segment. Topologically, residues 53–343 (GREQPRPHVS…ALDFIFAPGR (291 aa)) are lumenal. 2 N-linked (GlcNAc...) asparagine glycosylation sites follow: Asn-77 and Asn-185. 2-oxoglutarate-binding residues include Trp-202 and Ser-246. His-257 is a Fe cation binding site. Residue 266–268 (RCH) participates in 2-oxoglutarate binding. His-302 contacts Fe cation. Arg-315 serves as a coordination point for 2-oxoglutarate.

Belongs to the aspartyl/asparaginyl beta-hydroxylase family. Fe cation serves as cofactor.

It is found in the membrane. Functionally, may function as 2-oxoglutarate-dependent dioxygenase. The sequence is that of Aspartate beta-hydroxylase domain-containing protein 2 (Asphd2) from Rattus norvegicus (Rat).